A 169-amino-acid polypeptide reads, in one-letter code: Inorganic pyrophosphatase (169 aa).

Substrate-binding residues include Lys20, Arg34, and Tyr46. Mg(2+) is bound by residues Asp56, Asp61, and Asp93. Tyr130 serves as a coordination point for substrate.

This sequence belongs to the PPase family. In terms of assembly, homohexamer. The cofactor is Mg(2+).

The protein localises to the cytoplasm. It catalyses the reaction diphosphate + H2O = 2 phosphate + H(+). Catalyzes the hydrolysis of inorganic pyrophosphate (PPi) forming two phosphate ions. The polypeptide is Inorganic pyrophosphatase (Methanosarcina mazei (strain ATCC BAA-159 / DSM 3647 / Goe1 / Go1 / JCM 11833 / OCM 88) (Methanosarcina frisia)).